Consider the following 258-residue polypeptide: NAD(P)H-hydrate epimerase (258 aa).

A YjeF N-terminal domain is found at 15–244 (AFQLDQELMS…RIAKEYGIED (230 aa)). 75–79 (NNGGD) lines the (6S)-NADPHX pocket. Positions 76 and 145 each coordinate K(+). (6S)-NADPHX-binding positions include 149 to 155 (GFSFKPP) and Asp181. Ser184 serves as a coordination point for K(+).

The protein belongs to the NnrE/AIBP family. The cofactor is K(+).

It is found in the cytoplasm. The protein resides in the mitochondrion. It catalyses the reaction (6R)-NADHX = (6S)-NADHX. The catalysed reaction is (6R)-NADPHX = (6S)-NADPHX. Functionally, catalyzes the epimerization of the S- and R-forms of NAD(P)HX, a damaged form of NAD(P)H that is a result of enzymatic or heat-dependent hydration. This is a prerequisite for the S-specific NAD(P)H-hydrate dehydratase to allow the repair of both epimers of NAD(P)HX. The sequence is that of NAD(P)H-hydrate epimerase from Candida albicans (strain SC5314 / ATCC MYA-2876) (Yeast).